We begin with the raw amino-acid sequence, 158 residues long: Transcription elongation factor GreA (158 aa).

Residues 10 to 75 adopt a coiled-coil conformation; the sequence is TKEGKEKLEQ…QMLENMIRNA (66 aa).

Belongs to the GreA/GreB family.

In terms of biological role, necessary for efficient RNA polymerase transcription elongation past template-encoded arresting sites. The arresting sites in DNA have the property of trapping a certain fraction of elongating RNA polymerases that pass through, resulting in locked ternary complexes. Cleavage of the nascent transcript by cleavage factors such as GreA or GreB allows the resumption of elongation from the new 3'terminus. GreA releases sequences of 2 to 3 nucleotides. The protein is Transcription elongation factor GreA of Geobacillus kaustophilus (strain HTA426).